The sequence spans 408 residues: Imidazolonepropionase (408 aa).

2 residues coordinate Fe(3+): His-72 and His-74. The Zn(2+) site is built by His-72 and His-74. The 4-imidazolone-5-propanoate site is built by Arg-81, Tyr-144, and His-177. Tyr-144 contacts N-formimidoyl-L-glutamate. Fe(3+) is bound at residue His-242. His-242 is a Zn(2+) binding site. Gln-245 contacts 4-imidazolone-5-propanoate. Asp-317 is a binding site for Fe(3+). Asp-317 lines the Zn(2+) pocket. N-formimidoyl-L-glutamate is bound by residues Asn-319 and Gly-321. Thr-322 serves as a coordination point for 4-imidazolone-5-propanoate.

The protein belongs to the metallo-dependent hydrolases superfamily. HutI family. The cofactor is Zn(2+). Fe(3+) serves as cofactor.

The protein resides in the cytoplasm. It catalyses the reaction 4-imidazolone-5-propanoate + H2O = N-formimidoyl-L-glutamate. Its pathway is amino-acid degradation; L-histidine degradation into L-glutamate; N-formimidoyl-L-glutamate from L-histidine: step 3/3. Functionally, catalyzes the hydrolytic cleavage of the carbon-nitrogen bond in imidazolone-5-propanoate to yield N-formimidoyl-L-glutamate. It is the third step in the universal histidine degradation pathway. The chain is Imidazolonepropionase from Aliivibrio fischeri (strain MJ11) (Vibrio fischeri).